Reading from the N-terminus, the 104-residue chain is MSSVPASAYLTLAIILFCIGLFGALTKRNTVIVLVCIELMLNAANLNLVAFSKLGLFPNLTGQIFSLFTMAVAAAEAALGLAILIALYRNRTTVQVDEMDTLKG.

3 helical membrane passes run 4 to 24 (VPASAYLTLAIILFCIGLFGA), 31 to 51 (VIVLVCIELMLNAANLNLVAF), and 67 to 87 (LFTMAVAAAEAALGLAILIAL).

The protein belongs to the complex I subunit 4L family. As to quaternary structure, NDH-1 is composed of 14 different subunits. Subunits NuoA, H, J, K, L, M, N constitute the membrane sector of the complex.

It is found in the cell membrane. It carries out the reaction a quinone + NADH + 5 H(+)(in) = a quinol + NAD(+) + 4 H(+)(out). NDH-1 shuttles electrons from NADH, via FMN and iron-sulfur (Fe-S) centers, to quinones in the respiratory chain. The immediate electron acceptor for the enzyme in this species is believed to be a menaquinone. Couples the redox reaction to proton translocation (for every two electrons transferred, four hydrogen ions are translocated across the cytoplasmic membrane), and thus conserves the redox energy in a proton gradient. The sequence is that of NADH-quinone oxidoreductase subunit K from Bacillus cereus (strain ATCC 14579 / DSM 31 / CCUG 7414 / JCM 2152 / NBRC 15305 / NCIMB 9373 / NCTC 2599 / NRRL B-3711).